A 404-amino-acid chain; its full sequence is Imidazolonepropionase (404 aa).

The Fe(3+) site is built by histidine 73 and histidine 75. Histidine 73 and histidine 75 together coordinate Zn(2+). 4-imidazolone-5-propanoate is bound by residues arginine 82, tyrosine 145, and histidine 178. Tyrosine 145 is a binding site for N-formimidoyl-L-glutamate. Residue histidine 243 coordinates Fe(3+). Histidine 243 serves as a coordination point for Zn(2+). A 4-imidazolone-5-propanoate-binding site is contributed by glutamine 246. Residue aspartate 318 participates in Fe(3+) binding. Aspartate 318 is a Zn(2+) binding site. N-formimidoyl-L-glutamate is bound by residues asparagine 320 and glycine 322. Serine 323 provides a ligand contact to 4-imidazolone-5-propanoate.

Belongs to the metallo-dependent hydrolases superfamily. HutI family. The cofactor is Zn(2+). Fe(3+) is required as a cofactor.

The protein resides in the cytoplasm. It carries out the reaction 4-imidazolone-5-propanoate + H2O = N-formimidoyl-L-glutamate. The protein operates within amino-acid degradation; L-histidine degradation into L-glutamate; N-formimidoyl-L-glutamate from L-histidine: step 3/3. In terms of biological role, catalyzes the hydrolytic cleavage of the carbon-nitrogen bond in imidazolone-5-propanoate to yield N-formimidoyl-L-glutamate. It is the third step in the universal histidine degradation pathway. The protein is Imidazolonepropionase of Bradyrhizobium diazoefficiens (strain JCM 10833 / BCRC 13528 / IAM 13628 / NBRC 14792 / USDA 110).